The following is a 466-amino-acid chain: Argininosuccinate lyase (466 aa).

The 2-(N(omega)-L-arginino)succinate site is built by serine 27, asparagine 114, and threonine 159. The active-site Proton acceptor is the histidine 160. Catalysis depends on serine 281, which acts as the Proton donor. 2-(N(omega)-L-arginino)succinate is bound by residues asparagine 289, tyrosine 321, glutamine 326, and lysine 329.

The protein belongs to the lyase 1 family. Argininosuccinate lyase subfamily. As to quaternary structure, homotetramer. As to expression, eye lens.

It catalyses the reaction 2-(N(omega)-L-arginino)succinate = fumarate + L-arginine. It participates in amino-acid biosynthesis; L-arginine biosynthesis; L-arginine from L-ornithine and carbamoyl phosphate: step 3/3. Functionally, delta crystallin, the principal crystallin in embryonic lens, is found only in birds and reptiles. This protein may also function as an enzymatically active argininosuccinate lyase. This chain is Argininosuccinate lyase (ASL2), found in Gallus gallus (Chicken).